The following is a 168-amino-acid chain: Transmembrane protein 31 (168 aa).

A compositionally biased stretch (basic and acidic residues) spans 1-11 (MRLTEKSEGEQ). The tract at residues 1-63 (MRLTEKSEGE…LPSRRTPTTS (63 aa)) is disordered. 2 stretches are compositionally biased toward polar residues: residues 13-22 (LKPNNSNAPN) and 35-48 (HTPA…ADTQ). Positions 49–63 (PSRCRLPSRRTPTTS) are enriched in low complexity. A run of 2 helical transmembrane segments spans residues 119-139 (IGLP…YKFF) and 148-168 (FFIL…LIFF).

It localises to the membrane. The polypeptide is Transmembrane protein 31 (TMEM31) (Homo sapiens (Human)).